Here is a 294-residue protein sequence, read N- to C-terminus: Movement protein (294 aa).

In terms of assembly, interacts with nucleoprotein.

Its function is as follows. Transports viral genome to neighboring plant cells directly through plasmosdesmata, without any budding. The movement protein allows efficient cell to cell propagation, by bypassing the host cell wall barrier. Displays an RNA-binding activity. The chain is Movement protein (3) from Rice yellow stunt virus (RYSV).